The sequence spans 241 residues: Triosephosphate isomerase (241 aa).

Substrate is bound at residue 9–11 (NWK). His-88 serves as the catalytic Electrophile. Glu-158 acts as the Proton acceptor in catalysis. Substrate contacts are provided by residues Gly-164, Ser-203, and 224-225 (GG).

This sequence belongs to the triosephosphate isomerase family. In terms of assembly, homodimer.

It is found in the cytoplasm. The enzyme catalyses D-glyceraldehyde 3-phosphate = dihydroxyacetone phosphate. The protein operates within carbohydrate biosynthesis; gluconeogenesis. It functions in the pathway carbohydrate degradation; glycolysis; D-glyceraldehyde 3-phosphate from glycerone phosphate: step 1/1. Involved in the gluconeogenesis. Catalyzes stereospecifically the conversion of dihydroxyacetone phosphate (DHAP) to D-glyceraldehyde-3-phosphate (G3P). In Dichelobacter nodosus (strain VCS1703A), this protein is Triosephosphate isomerase.